Consider the following 214-residue polypeptide: Charged multivesicular body protein 2b (214 aa).

Residues 16-55 (EQNKELRGTQRAITRDRAALEKQEKQLEMEIKKMAKAGNK) are a coiled coil. The segment at 178-203 (MAKAPSAAKGLPSTSASKSSGISDEE) is disordered. Residues 189–199 (PSTSASKSSGI) show a composition bias toward polar residues. Positions 202–212 (EEIERQLKALG) match the MIT-interacting motif motif.

It belongs to the SNF7 family. In terms of assembly, probable core component of the endosomal sorting required for transport complex III (ESCRT-III). ESCRT-III components are thought to multimerize to form a flat lattice on the perimeter membrane of the endosome.

It is found in the cytoplasm. The protein resides in the cytosol. The protein localises to the late endosome membrane. In terms of biological role, probable core component of the endosomal sorting required for transport complex III (ESCRT-III) which is involved in multivesicular bodies (MVBs) formation and sorting of endosomal cargo proteins into MVBs. MVBs contain intraluminal vesicles (ILVs) that are generated by invagination and scission from the limiting membrane of the endosome and mostly are delivered to lysosomes enabling degradation of membrane proteins, such as stimulated growth factor receptors, lysosomal enzymes and lipids. The sequence is that of Charged multivesicular body protein 2b (chmp2b) from Xenopus tropicalis (Western clawed frog).